The sequence spans 659 residues: Protein phosphatase Slingshot homolog 3 (659 aa).

Polar residues predominate over residues 1–16; the sequence is MALVTVSRSPPGSGAS. Positions 1–31 are disordered; that stretch reads MALVTVSRSPPGSGASTPVGPWDQAVQRRSR. Alanine 2 carries the post-translational modification N-acetylalanine. Serine 9 and serine 37 each carry phosphoserine. Positions 46-96 are disordered; it reads LGLQDGGDNDDAAEASSEPTEKAPSEEELHGDQTDFGQGSQSPQKQEEQRQ. The span at 64–78 shows a compositional bias: basic and acidic residues; it reads PTEKAPSEEELHGDQ. The segment covering 80-89 has biased composition (polar residues); it reads DFGQGSQSPQ. A phosphoserine mark is found at serine 85 and serine 87. Residues 269–324 form the DEK-C domain; that stretch reads EQMEQAIRAELWKVLDVSDLESVTSKEIRQALELRLGLPLQQYRDFIDNQMLLLVA. In terms of domain architecture, Tyrosine-protein phosphatase spans 328–469; the sequence is RASRIFPHLY…LQIYQGILTA (142 aa). The Phosphocysteine intermediate role is filled by cysteine 413. 3 disordered regions span residues 482–534, 547–603, and 617–638; these read GVSP…RINL, SLEL…RQSV, and QAFQ…ISST. Over residues 547-557 the composition is skewed to low complexity; sequence SLELESTSETS.

The protein belongs to the protein-tyrosine phosphatase family. Does not bind to, or colocalize with, filamentous actin.

Its subcellular location is the cytoplasm. The protein localises to the cytoskeleton. The protein resides in the nucleus. The catalysed reaction is O-phospho-L-tyrosyl-[protein] + H2O = L-tyrosyl-[protein] + phosphate. It carries out the reaction O-phospho-L-seryl-[protein] + H2O = L-seryl-[protein] + phosphate. It catalyses the reaction O-phospho-L-threonyl-[protein] + H2O = L-threonyl-[protein] + phosphate. In terms of biological role, protein phosphatase which may play a role in the regulation of actin filament dynamics. Can dephosphorylate and activate the actin binding/depolymerizing factor cofilin, which subsequently binds to actin filaments and stimulates their disassembly. This Homo sapiens (Human) protein is Protein phosphatase Slingshot homolog 3 (SSH3).